The chain runs to 1013 residues: Hemoglobin-binding protein A (1013 aa).

Residues M1–A24 form the signal peptide. Repeat copies occupy residues Q26–N29, Q30–N33, Q34–N37, Q38–N41, Q42–N45, Q46–N49, Q50–N53, and Q54–N57. The tract at residues Q26–N57 is 8 X 4 AA tandem repeats of Q-P-T-N. The segment covering Q26–Q58 has biased composition (low complexity). Residues Q26–N61 are disordered. Residues E67–S74 carry the TonB box motif. Residues S78–K205 enclose the TBDR plug domain. One can recognise a TBDR beta-barrel domain in the interval N213–F1013. Positions N996–F1013 match the TonB C-terminal box motif.

This sequence belongs to the TonB-dependent receptor family. Hemoglobin/haptoglobin binding protein subfamily.

It localises to the cell outer membrane. Its function is as follows. Acts as a receptor for hemoglobin of the human host and is required for heme uptake. This Haemophilus influenzae protein is Hemoglobin-binding protein A (hgbA).